Here is a 947-residue protein sequence, read N- to C-terminus: Isoleucine--tRNA ligase (947 aa).

The short motif at Pro57–His67 is the 'HIGH' region element. L-isoleucyl-5'-AMP is bound at residue Glu568. The 'KMSKS' region motif lies at Lys609–Ser613. Lys612 is a binding site for ATP. The Zn(2+) site is built by Cys908, Cys911, Cys926, and Cys929.

Belongs to the class-I aminoacyl-tRNA synthetase family. IleS type 1 subfamily. In terms of assembly, monomer. Requires Zn(2+) as cofactor.

The protein localises to the cytoplasm. It carries out the reaction tRNA(Ile) + L-isoleucine + ATP = L-isoleucyl-tRNA(Ile) + AMP + diphosphate. Its function is as follows. Catalyzes the attachment of isoleucine to tRNA(Ile). As IleRS can inadvertently accommodate and process structurally similar amino acids such as valine, to avoid such errors it has two additional distinct tRNA(Ile)-dependent editing activities. One activity is designated as 'pretransfer' editing and involves the hydrolysis of activated Val-AMP. The other activity is designated 'posttransfer' editing and involves deacylation of mischarged Val-tRNA(Ile). This chain is Isoleucine--tRNA ligase, found in Persephonella marina (strain DSM 14350 / EX-H1).